The chain runs to 416 residues: Tyrosine--tRNA ligase (416 aa).

Tyr40 serves as a coordination point for L-tyrosine. A 'HIGH' region motif is present at residues 45 to 54 (ATAASLHVGH). L-tyrosine contacts are provided by Tyr177 and Gln181. A 'KMSKS' region motif is present at residues 237-241 (KMGKS). Lys240 provides a ligand contact to ATP. The region spanning 351-416 (LSVAHFLVAA…RKKHKLVRLS (66 aa)) is the S4 RNA-binding domain.

The protein belongs to the class-I aminoacyl-tRNA synthetase family. TyrS type 1 subfamily. Homodimer.

It is found in the cytoplasm. It carries out the reaction tRNA(Tyr) + L-tyrosine + ATP = L-tyrosyl-tRNA(Tyr) + AMP + diphosphate + H(+). Catalyzes the attachment of tyrosine to tRNA(Tyr) in a two-step reaction: tyrosine is first activated by ATP to form Tyr-AMP and then transferred to the acceptor end of tRNA(Tyr). In Cereibacter sphaeroides (strain ATCC 17029 / ATH 2.4.9) (Rhodobacter sphaeroides), this protein is Tyrosine--tRNA ligase.